The sequence spans 160 residues: MGDKIAVIPGTFDPITNGHLDIIERAAKIFDVLYVSVLNNSSKKPLFTIEERMEMIRQVTAHLPNVQVESASGLTVDYAATRGATAIVRGLRAVSDFEYEMQIASMNRTLNAEIETFFIMTNTKYSFLSSSMVKEVAQYQGDISELVPEIVNEQVQAKFK.

Threonine 11 contributes to the substrate binding site. ATP-binding positions include 11–12 and histidine 19; that span reads TF. 3 residues coordinate substrate: lysine 43, threonine 75, and arginine 89. ATP contacts are provided by residues 90–92, glutamate 100, and 125–131; these read GLR and YSFLSSS.

This sequence belongs to the bacterial CoaD family. As to quaternary structure, homohexamer. Mg(2+) serves as cofactor.

It localises to the cytoplasm. It catalyses the reaction (R)-4'-phosphopantetheine + ATP + H(+) = 3'-dephospho-CoA + diphosphate. It participates in cofactor biosynthesis; coenzyme A biosynthesis; CoA from (R)-pantothenate: step 4/5. Functionally, reversibly transfers an adenylyl group from ATP to 4'-phosphopantetheine, yielding dephospho-CoA (dPCoA) and pyrophosphate. The polypeptide is Phosphopantetheine adenylyltransferase (Listeria monocytogenes serotype 4b (strain CLIP80459)).